The primary structure comprises 29 residues: Brevinin-2Rc (29 aa).

An intrachain disulfide couples cysteine 23 to cysteine 29.

As to expression, expressed by the skin glands.

The protein localises to the secreted. In terms of biological role, antimicrobial peptide. The protein is Brevinin-2Rc of Pelophylax ridibundus (Marsh frog).